Here is an 831-residue protein sequence, read N- to C-terminus: MTDNQEIKPKKLTLGNSKLSLNKSFDSLTGAQSFVNANSKTLVEVRKSSTGSATTLSLNKERNSLDQTVIDANKEEFNRRLSILKKAAEQSKLNDPSKISTLSKLASINQSANSRIEPLETDKEVEPKQQNTEENKVEVSAKIVQDDEDIPSQIPKKKEDIFVKSPLVGMRTRYGIESEKELDKTADRKIVAPKIKLEEPKKFKKADLFNMLSDDESGSGRTRSLASIKRAREKEKRKLVSQAPEKVYREVTIPEVIGVGDLANAMSERVADVIKELMKLGILANASQTIDADTAELVATNLGHTVKRVQESDVENVLISDDKVEDLRTRAPVVTVMGHVDHGKTSLLDALKSTDIAAGELGGITQHIGAYRVTLADGRAITFIDTPGHEAFSEMRSRGAKVTDIVIIVVAADDGIKTQTVEAINHAKAAGVPIIVAINKIDKPDIDIERVKNELYVHEIIGEEAGGDVMVIPISALKKINLDKLEEAILLIAEMQDLKANPFGAAAGVVIESKIEQGRGTLTTILVQRGTLRNSDIIIAGTSYGKVKKMINDKGLEILEATPSVPVEIQGLNEVPFAGDKFNVVQNEKQAKDIAEYRMRLAKEKKISIAPRSSLEDLFLKASGNSKIKELPLIIKGDVQGSVEAISGSLLKLPSDEIKLRILHSGVGPITESDLSLAHASSAIIVGFNVRAGANALTAAEKEKVDIRYYSIIYHLIDDIKAIMSGMLDPIVREQYIGSAEIRQIFNIIKVGKIAGSYVTKGIIKKRAGVRLLRDNVVIHEGKFKTLKRFKDEVKEVREGYECGIAFENYEDIREGDTVEVFELIQEQRQL.

One can recognise a tr-type G domain in the interval 329 to 499 (TRAPVVTVMG…LLIAEMQDLK (171 aa)). The segment at 338 to 345 (GHVDHGKT) is G1. 338-345 (GHVDHGKT) lines the GTP pocket. Residues 363 to 367 (GITQH) form a G2 region. A G3 region spans residues 385–388 (DTPG). Residues 385 to 389 (DTPGH) and 439 to 442 (NKID) each bind GTP. The tract at residues 439–442 (NKID) is G4. The G5 stretch occupies residues 475-477 (SAL).

Belongs to the TRAFAC class translation factor GTPase superfamily. Classic translation factor GTPase family. IF-2 subfamily.

The protein resides in the cytoplasm. One of the essential components for the initiation of protein synthesis. Protects formylmethionyl-tRNA from spontaneous hydrolysis and promotes its binding to the 30S ribosomal subunits. Also involved in the hydrolysis of GTP during the formation of the 70S ribosomal complex. The polypeptide is Translation initiation factor IF-2 (Rickettsia massiliae (strain Mtu5)).